The following is a 523-amino-acid chain: GMP synthase [glutamine-hydrolyzing] (523 aa).

In terms of domain architecture, Glutamine amidotransferase type-1 spans lysine 8–lysine 205. Cysteine 85 functions as the Nucleophile in the catalytic mechanism. Residues histidine 179 and glutamate 181 contribute to the active site. A GMPS ATP-PPase domain is found at tryptophan 206 to arginine 398. Residue serine 233–serine 239 participates in ATP binding.

As to quaternary structure, homodimer.

It catalyses the reaction XMP + L-glutamine + ATP + H2O = GMP + L-glutamate + AMP + diphosphate + 2 H(+). It participates in purine metabolism; GMP biosynthesis; GMP from XMP (L-Gln route): step 1/1. Functionally, catalyzes the synthesis of GMP from XMP. The polypeptide is GMP synthase [glutamine-hydrolyzing] (Haemophilus influenzae (strain 86-028NP)).